A 1160-amino-acid polypeptide reads, in one-letter code: Major DNA-binding protein (1160 aa).

The short motif at 808 to 809 (FW) is the Required for filament formation element. The segment at 1139–1160 (ARGGEHAFDEDCGLLPAKRGRL) is required for nuclear localization.

This sequence belongs to the herpesviridae major DNA-binding protein family. As to quaternary structure, homooligomers. Forms double-helical filaments necessary for the formation of replication compartments within the host nucleus. Interacts with the origin-binding protein. Interacts with the helicase primase complex; this interaction stimulates primer synthesis activity of the helicase-primase complex. Interacts with the DNA polymerase. Interacts with the alkaline exonuclease; this interaction increases its nuclease processivity.

The protein localises to the host nucleus. Single-stranded DNA-binding protein required for DNA replication. Its function is as follows. Plays several crucial roles in viral infection. Participates in the opening of the viral DNA origin to initiate replication by interacting with the origin-binding protein. May disrupt loops, hairpins and other secondary structures present on ssDNA to reduce and eliminate pausing of viral DNA polymerase at specific sites during elongation. Promotes viral DNA recombination by performing strand-transfer, characterized by the ability to transfer a DNA strand from a linear duplex to a complementary single-stranded DNA circle. Can also catalyze the renaturation of complementary single strands. Additionally, reorganizes the host cell nucleus, leading to the formation of prereplicative sites and replication compartments. This process is driven by the protein which can form double-helical filaments in the absence of DNA. The protein is Major DNA-binding protein of Simian cytomegalovirus (strain Colburn).